The following is a 628-amino-acid chain: Biosynthetic arginine decarboxylase (628 aa).

Position 99 is an N6-(pyridoxal phosphate)lysine (lysine 99). 279–289 (VDVGGGLGIDY) is a substrate binding site.

It belongs to the Orn/Lys/Arg decarboxylase class-II family. SpeA subfamily. Mg(2+) serves as cofactor. It depends on pyridoxal 5'-phosphate as a cofactor.

The catalysed reaction is L-arginine + H(+) = agmatine + CO2. Its pathway is amine and polyamine biosynthesis; agmatine biosynthesis; agmatine from L-arginine: step 1/1. Catalyzes the biosynthesis of agmatine from arginine. In Xylella fastidiosa (strain M12), this protein is Biosynthetic arginine decarboxylase.